Here is a 490-residue protein sequence, read N- to C-terminus: Cobyric acid synthase (490 aa).

One can recognise a GATase cobBQ-type domain in the interval 252 to 439; the sequence is RLKVVVPVLP…LHGLFESTAA (188 aa). The Nucleophile role is filled by Cys333. His431 is a catalytic residue.

Belongs to the CobB/CobQ family. CobQ subfamily.

It functions in the pathway cofactor biosynthesis; adenosylcobalamin biosynthesis. Functionally, catalyzes amidations at positions B, D, E, and G on adenosylcobyrinic A,C-diamide. NH(2) groups are provided by glutamine, and one molecule of ATP is hydrogenolyzed for each amidation. This is Cobyric acid synthase from Pseudomonas aeruginosa (strain ATCC 15692 / DSM 22644 / CIP 104116 / JCM 14847 / LMG 12228 / 1C / PRS 101 / PAO1).